The sequence spans 98 residues: uncharacterized protein (98 aa).

This sequence belongs to the HesB/IscA family.

This is an uncharacterized protein from Staphylococcus aureus (strain MRSA252).